The sequence spans 196 residues: Imidazoleglycerol-phosphate dehydratase (196 aa).

Belongs to the imidazoleglycerol-phosphate dehydratase family.

The protein localises to the cytoplasm. The enzyme catalyses D-erythro-1-(imidazol-4-yl)glycerol 3-phosphate = 3-(imidazol-4-yl)-2-oxopropyl phosphate + H2O. It functions in the pathway amino-acid biosynthesis; L-histidine biosynthesis; L-histidine from 5-phospho-alpha-D-ribose 1-diphosphate: step 6/9. This is Imidazoleglycerol-phosphate dehydratase from Clostridium botulinum (strain 657 / Type Ba4).